A 457-amino-acid chain; its full sequence is BAG family molecular chaperone regulator 4 (457 aa).

Residues 1 to 101 form a disordered region; it reads MSALRRSGYG…QPPYPSYNSN (101 aa). At S7 the chain carries Phosphoserine. Low complexity predominate over residues 8-20; it reads GYGPSDGPSYGRY. Residues 30 to 47 are compositionally biased toward pro residues; it reads VHPPPPLYPLRPEPPQPP. An omega-N-methylarginine mark is found at R40, R53, and R108. Disordered stretches follow at residues 113–136, 166–333, and 347–377; these read YPST…NGAY, STEV…DDSD, and LYGN…ESTP. Residues 166–182 show a composition bias toward polar residues; the sequence is STEVPSTYRSSGNSPTP. R185 carries the omega-N-methylarginine modification. 2 stretches are compositionally biased toward low complexity: residues 274 to 284 and 294 to 308; these read STSPWPSSGSP and QPKD…SDQS. Composition is skewed to polar residues over residues 320–333 and 347–365; these read QYES…DDSD and LYGN…SSSL. One can recognise a BAG domain in the interval 379 to 456; it reads SIKKIIHVLE…AILEKLEKKG (78 aa).

Binds to the ATPase domain of HSP/HSC70 chaperones. Binds to the death domain of TNFRSF1A in the absence of TNF and thereby prevents binding of adapter molecules such as TRADD or TRAF2. Binds to the death domain of TNFRSF12. Interacts with PRKN. As to expression, ubiquitous.

The protein localises to the cytoplasm. Its function is as follows. Inhibits the chaperone activity of HSP70/HSC70 by promoting substrate release. Prevents constitutive TNFRSF1A signaling. Negative regulator of PRKN translocation to damaged mitochondria. The protein is BAG family molecular chaperone regulator 4 (BAG4) of Homo sapiens (Human).